A 358-amino-acid chain; its full sequence is DNA-directed RNA polymerase subunit alpha (358 aa).

The segment at 1 to 244 is alpha N-terminal domain (alpha-NTD); sequence MENKLFSCIE…NLFLSIYDTS (244 aa). The alpha C-terminal domain (alpha-CTD) stretch occupies residues 287–358; sequence YKTSFDKNLT…KMVKYGTVNK (72 aa).

Belongs to the RNA polymerase alpha chain family. As to quaternary structure, homodimer. The RNAP catalytic core consists of 2 alpha, 1 beta, 1 beta' and 1 omega subunit. When a sigma factor is associated with the core the holoenzyme is formed, which can initiate transcription.

It is found in the plastid. Its subcellular location is the chloroplast. The catalysed reaction is RNA(n) + a ribonucleoside 5'-triphosphate = RNA(n+1) + diphosphate. DNA-dependent RNA polymerase catalyzes the transcription of DNA into RNA using the four ribonucleoside triphosphates as substrates. In Bigelowiella natans (Pedinomonas minutissima), this protein is DNA-directed RNA polymerase subunit alpha (rpoA).